We begin with the raw amino-acid sequence, 238 residues long: Purine nucleoside phosphorylase DeoD-type (238 aa).

Histidine 5 contacts a purine D-ribonucleoside. Phosphate is bound by residues glycine 21, arginine 25, arginine 44, and 88–91 (RVGS). Residues 180–182 (EME) and 204–205 (SD) each bind a purine D-ribonucleoside. Aspartate 205 acts as the Proton donor in catalysis.

The protein belongs to the PNP/UDP phosphorylase family. Homohexamer; trimer of homodimers.

The catalysed reaction is a purine D-ribonucleoside + phosphate = a purine nucleobase + alpha-D-ribose 1-phosphate. It catalyses the reaction a purine 2'-deoxy-D-ribonucleoside + phosphate = a purine nucleobase + 2-deoxy-alpha-D-ribose 1-phosphate. In terms of biological role, catalyzes the reversible phosphorolytic breakdown of the N-glycosidic bond in the beta-(deoxy)ribonucleoside molecules, with the formation of the corresponding free purine bases and pentose-1-phosphate. In Photorhabdus laumondii subsp. laumondii (strain DSM 15139 / CIP 105565 / TT01) (Photorhabdus luminescens subsp. laumondii), this protein is Purine nucleoside phosphorylase DeoD-type.